We begin with the raw amino-acid sequence, 529 residues long: Hyaluronidase PH-20 (529 aa).

A signal peptide spans 1–35 (MGAFTFKHSFFGSFVECSGVLQTVFIFLLIPCCLA). 2 disulfides stabilise this stretch: cysteine 59–cysteine 351 and cysteine 223–cysteine 237. Asparagine 81 is a glycosylation site (N-linked (GlcNAc...) asparagine). The Proton donor role is filled by glutamate 147. Residues asparagine 165 and asparagine 179 are each glycosylated (N-linked (GlcNAc...) asparagine). 2 N-linked (GlcNAc...) asparagine glycosylation sites follow: asparagine 253 and asparagine 368. 3 cysteine pairs are disulfide-bonded: cysteine 376–cysteine 387, cysteine 381–cysteine 435, and cysteine 437–cysteine 464. Asparagine 401 is a glycosylation site (N-linked (GlcNAc...) asparagine). Residues 478 to 502 (DEPPITDDTSQNQDSISDITSSAPP) are disordered. Polar residues predominate over residues 487–502 (SQNQDSISDITSSAPP). Residue serine 492 is the site of GPI-anchor amidated serine attachment. Positions 493–529 (ISDITSSAPPSSHILPKDLSWCLFLLSIFSQHWKYLL) are cleaved as a propeptide — removed in mature form.

The protein belongs to the glycosyl hydrolase 56 family. In terms of processing, endoproteolysis (toward the C-terminus producing two disulfide-linked fragments) could activate PH-20. As to expression, testis.

It localises to the cell membrane. It catalyses the reaction Random hydrolysis of (1-&gt;4)-linkages between N-acetyl-beta-D-glucosamine and D-glucuronate residues in hyaluronate.. Involved in sperm-egg adhesion. Upon fertilization sperm must first penetrate a layer of cumulus cells that surrounds the egg before reaching the zona pellucida. The cumulus cells are embedded in a matrix containing hyaluronic acid which is formed prior to ovulation. This protein aids in penetrating the layer of cumulus cells by digesting hyaluronic acid. The chain is Hyaluronidase PH-20 (SPAM1) from Cavia porcellus (Guinea pig).